The chain runs to 350 residues: Delta(6)-protoilludene synthase STEHIDRAFT_64702 (350 aa).

Residues Asp89, Asn225, Ser229, and Glu233 each coordinate Mg(2+). A D(D/E)XX(D/E) motif motif is present at residues 89 to 93 (DEHSD). The NSE motif motif lies at 225 to 233 (NDIVSYNIE). Residues Arg314 and Tyr315 each coordinate (2E,6E)-farnesyl diphosphate.

The protein belongs to the terpene synthase family. It depends on Mg(2+) as a cofactor. Requires Mn(2+) as cofactor. The cofactor is Ca(2+). Ni(2+) serves as cofactor. Co(2+) is required as a cofactor.

The catalysed reaction is (2E,6E)-farnesyl diphosphate = Delta(6)-protoilludene + diphosphate. It catalyses the reaction (2E,6E)-farnesyl diphosphate = alpha-selinene + diphosphate. Its activity is regulated as follows. Ca(2+) switches the cyclization mechanism of delta(6)-protoilludene synthase from 1,11 to 1,10 cyclization which leads to the production of beta-elemene. Functionally, terpene cyclase that catalyzes the cyclization of farnesyl diphosphate (FPP) to delta(6)-protoilludene. In presence of Ca(2+), a significant switch from 1,11 to a dual 1,11/1,10 cyclization occurs, producing beta-elemene as the major product, with lower levels of delta(6)-protoilludene and (E)-beta-caryophyllene, and traces of beta-selinene and alpha-selinene. The protein is Delta(6)-protoilludene synthase STEHIDRAFT_64702 of Stereum hirsutum (strain FP-91666) (White-rot fungus).